Reading from the N-terminus, the 87-residue chain is MTIFSTISSMSNVSSSSKSKISLMANSNGGQSLNNISCGGCGGSSSGGIVYTGPSGRSYTLPELIAVGVAHTKAFLMGASGSGNCSC.

It belongs to the hssA/B family.

This chain is HssA/B-like protein 31 (hssl31), found in Dictyostelium discoideum (Social amoeba).